A 739-amino-acid polypeptide reads, in one-letter code: Long-chain-fatty-acid--CoA ligase ACSBG2 (739 aa).

ATP-binding positions include 287-295 (TSGTTGQPK), 478-483 (ELYGMS), Asp-556, Arg-571, and Lys-684.

The protein belongs to the ATP-dependent AMP-binding enzyme family. Bubblegum subfamily.

The protein localises to the cytoplasm. The enzyme catalyses a long-chain fatty acid + ATP + CoA = a long-chain fatty acyl-CoA + AMP + diphosphate. It catalyses the reaction (5Z,8Z,11Z,14Z)-eicosatetraenoate + ATP + CoA = (5Z,8Z,11Z,14Z)-eicosatetraenoyl-CoA + AMP + diphosphate. It carries out the reaction hexadecanoate + ATP + CoA = hexadecanoyl-CoA + AMP + diphosphate. The catalysed reaction is (9Z)-octadecenoate + ATP + CoA = (9Z)-octadecenoyl-CoA + AMP + diphosphate. The enzyme catalyses (9Z,12Z)-octadecadienoate + ATP + CoA = (9Z,12Z)-octadecadienoyl-CoA + AMP + diphosphate. It catalyses the reaction tetracosanoate + ATP + CoA = tetracosanoyl-CoA + AMP + diphosphate. Catalyzes the conversion of fatty acids such as long chain and very long-chain fatty acids to their active form acyl-CoAs for both synthesis of cellular lipids, and degradation via beta-oxidation. Can activate diverse saturated, monosaturated and polyunsaturated fatty acids. The chain is Long-chain-fatty-acid--CoA ligase ACSBG2 from Xenopus laevis (African clawed frog).